We begin with the raw amino-acid sequence, 268 residues long: MDTWKVGPVELKSRLILGSGKYEDFGVMREAIAAAKAEVVTVSVRRVELKAPGHVGLLEALEGVRLLPNTAGARTAEEAVRLARLGRLLTGERWVKLEVIPDPTYLLPDPLETLKAAERLIEEDFLVLPYMGPDLVLAKRLAALGTATVMPLAAPIGSGWGVRTRALLELFAREKASLPPVVVDAGLGLPSHAAEVMELGLDAVLVNTAIAEAQDPPAMAEAFRLAVEAGRKAYLAGPMRPREAASPSSPVEGVPFTPTGPRPGRGPQ.

Lys96 (schiff-base intermediate with DXP) is an active-site residue. Residues Gly157, 185 to 186 (AG), and 207 to 208 (NT) contribute to the 1-deoxy-D-xylulose 5-phosphate site. The disordered stretch occupies residues 238 to 268 (PMRPREAASPSSPVEGVPFTPTGPRPGRGPQ). Residues 258 to 268 (PTGPRPGRGPQ) are compositionally biased toward pro residues.

Belongs to the ThiG family. In terms of assembly, homotetramer. Forms heterodimers with either ThiH or ThiS.

It localises to the cytoplasm. The enzyme catalyses [ThiS sulfur-carrier protein]-C-terminal-Gly-aminoethanethioate + 2-iminoacetate + 1-deoxy-D-xylulose 5-phosphate = [ThiS sulfur-carrier protein]-C-terminal Gly-Gly + 2-[(2R,5Z)-2-carboxy-4-methylthiazol-5(2H)-ylidene]ethyl phosphate + 2 H2O + H(+). It participates in cofactor biosynthesis; thiamine diphosphate biosynthesis. In terms of biological role, catalyzes the rearrangement of 1-deoxy-D-xylulose 5-phosphate (DXP) to produce the thiazole phosphate moiety of thiamine. Sulfur is provided by the thiocarboxylate moiety of the carrier protein ThiS. In vitro, sulfur can be provided by H(2)S. This Thermus thermophilus (strain ATCC 27634 / DSM 579 / HB8) protein is Thiazole synthase.